The primary structure comprises 158 residues: Transcription elongation factor GreA (158 aa).

Belongs to the GreA/GreB family.

Necessary for efficient RNA polymerase transcription elongation past template-encoded arresting sites. The arresting sites in DNA have the property of trapping a certain fraction of elongating RNA polymerases that pass through, resulting in locked ternary complexes. Cleavage of the nascent transcript by cleavage factors such as GreA or GreB allows the resumption of elongation from the new 3'terminus. GreA releases sequences of 2 to 3 nucleotides. The sequence is that of Transcription elongation factor GreA from Rhizobium leguminosarum bv. trifolii (strain WSM2304).